The following is a 196-amino-acid chain: HTH-type transcriptional regulator BetI (196 aa).

The HTH tetR-type domain occupies 8–68; the sequence is PVRREQLIRA…AAMRQILREL (61 aa). The H-T-H motif DNA-binding region spans 31 to 50; that stretch reads TVATIAKKAGLSSGIVAHYF.

Its pathway is amine and polyamine biosynthesis; betaine biosynthesis via choline pathway [regulation]. Its function is as follows. Repressor involved in the biosynthesis of the osmoprotectant glycine betaine. It represses transcription of the choline transporter BetT and the genes of BetAB involved in the synthesis of glycine betaine. This Stenotrophomonas maltophilia (strain R551-3) protein is HTH-type transcriptional regulator BetI.